We begin with the raw amino-acid sequence, 197 residues long: Protein GrpE (197 aa).

A compositionally biased stretch (basic and acidic residues) spans 1 to 12 (MTDSDGKTDKSG). Residues 1-35 (MTDSDGKTDKSGEPAAEVEPVVSKPYVMPDDPEDD) form a disordered region.

The protein belongs to the GrpE family. As to quaternary structure, homodimer.

It is found in the cytoplasm. Participates actively in the response to hyperosmotic and heat shock by preventing the aggregation of stress-denatured proteins, in association with DnaK and GrpE. It is the nucleotide exchange factor for DnaK and may function as a thermosensor. Unfolded proteins bind initially to DnaJ; upon interaction with the DnaJ-bound protein, DnaK hydrolyzes its bound ATP, resulting in the formation of a stable complex. GrpE releases ADP from DnaK; ATP binding to DnaK triggers the release of the substrate protein, thus completing the reaction cycle. Several rounds of ATP-dependent interactions between DnaJ, DnaK and GrpE are required for fully efficient folding. The sequence is that of Protein GrpE from Nitrobacter winogradskyi (strain ATCC 25391 / DSM 10237 / CIP 104748 / NCIMB 11846 / Nb-255).